The chain runs to 363 residues: Peptide chain release factor 1 (363 aa).

Glutamine 237 is subject to N5-methylglutamine. Residues 286-296 (EKRRSAEESTR) show a composition bias toward basic and acidic residues. The disordered stretch occupies residues 286-305 (EKRRSAEESTRRSLVASGDR).

This sequence belongs to the prokaryotic/mitochondrial release factor family. Methylated by PrmC. Methylation increases the termination efficiency of RF1.

The protein localises to the cytoplasm. In terms of biological role, peptide chain release factor 1 directs the termination of translation in response to the peptide chain termination codons UAG and UAA. This Shewanella baltica (strain OS155 / ATCC BAA-1091) protein is Peptide chain release factor 1.